The primary structure comprises 370 residues: MRNLDFIDSFIPTEGKYIRVMDFYNSEYPFCIHAPSAPNGDIMTEICSRENNQYFIFFPTDDGRVIIANRHNGSVFTGEATSVVSDIYTGSPLQFFREVKRTMETYYLAIQNPESATDVRALEPHSHELPSRLYYTNNIENNSNILISNKEQIYLTLPSLPENEQYPKTPVLSGIDDIGPNQSEKSIIGSTLIPCIMVSDFISLGERMKTTPYYYVKHTQYWQSMWSALFPPGSKETKTEKSGITDTSQISMTDGINVSIGADFGLRFGNKTFGIKGGFTYDTKTQITNTSQLLIETTYTREYTNTENFPVRYTGYVLASEFTLHRSDGTQVNTIPWVALNDNYTTIARYPHFASEPLLGNTKIITDDQN.

Positions 1–6 (MRNLDF) are excised as a propeptide. The interval 1 to 155 (MRNLDFIDSF…LISNKEQIYL (155 aa)) is beta-trefoil domain. A disulfide bridge connects residues C31 and C47. The segment at 156-370 (TLPSLPENEQ…NTKIITDDQN (215 aa)) is pore-forming domain.

The protein belongs to the toxin_10 family. In terms of assembly, forms a heterodimer with BinB. Processed by proteases in the mosquito gut, probably at both the N- and C-termini.

The protein localises to the spore. The protein resides in the perispore. Component of a binary toxin active against Culex and some Aedes mosquito larvae; mortality towards both C.quinquefasciatus and A.atropalpus is maximal by 48 hours. A.aegypti is not very susceptible to this toxin. Binary toxin internalization into host gut cells requires both proteins. This Lysinibacillus sphaericus (Bacillus sphaericus) protein is Binary larvicide subunit BinA (binA).